The sequence spans 243 residues: Phosphoribosylaminoimidazole-succinocarboxamide synthase (243 aa).

Belongs to the SAICAR synthetase family.

It carries out the reaction 5-amino-1-(5-phospho-D-ribosyl)imidazole-4-carboxylate + L-aspartate + ATP = (2S)-2-[5-amino-1-(5-phospho-beta-D-ribosyl)imidazole-4-carboxamido]succinate + ADP + phosphate + 2 H(+). It participates in purine metabolism; IMP biosynthesis via de novo pathway; 5-amino-1-(5-phospho-D-ribosyl)imidazole-4-carboxamide from 5-amino-1-(5-phospho-D-ribosyl)imidazole-4-carboxylate: step 1/2. The polypeptide is Phosphoribosylaminoimidazole-succinocarboxamide synthase (Prochlorococcus marinus (strain MIT 9211)).